The chain runs to 272 residues: Orotidine 5'-phosphate decarboxylase (272 aa).

The Proton donor role is filled by Lys-96.

The protein belongs to the OMP decarboxylase family. Type 2 subfamily.

It carries out the reaction orotidine 5'-phosphate + H(+) = UMP + CO2. It participates in pyrimidine metabolism; UMP biosynthesis via de novo pathway; UMP from orotate: step 2/2. The chain is Orotidine 5'-phosphate decarboxylase from Christiangramia forsetii (strain DSM 17595 / CGMCC 1.15422 / KT0803) (Gramella forsetii).